The following is a 1475-amino-acid chain: MDSNENKKNGGDSLELNIINNNNDNNNNNDNNNNSTEEHIESVEQSIKEFNNVANELETEFRDYLVETHKNDVNNIKNDIEAPPSGEFEPGGGAEDEDFKLRNYFKQSKVDAIQNGGKLKKMGVSFKNLTVIGKGADQSVVSDLATPFTFLISKLNVKNWFKKSKPSTFDILHDVSGFCKDGEMLLVLGRPGSGCSSLLRTISNQTGSYVDVLGSVTYGGIDQKKWDKYKAECIYVPEEDTHYPTLTVRETLEFALKCKTPSNRLPNEKKRTFRSKIFNLLLGMFGMVHQAETMVGNEFVRGLSGGERKRITIAESMVSASSINCYDCSTRGLDAASALDYAKSIRIMSDTLHKTTIASFYQASDSIYNLFDRVLILEKGRCVYFGPVGLAKQYFIDMGFECEPRKSTPDFLTGVTNPQERKVRPGFTVPESSAEFEEAWKQSEIYAQSCQEQREYEKLIEIEQPSIDFIQEITEQKSKSTSKSSPYTTGFFVQVIALTIRNFQIIWGDKFSLISRYSSVLVQAPIYGSVFFAMSNSIDGAFTRGGAIFSSILFNALLSEQELSITFTGRRILQKHKTYAMYRPAALHFAQIITEIPIIMIQVFLFSIVTYFMFGLDSSGSKFFINCFTLIGFTLATNNLYRLAGNLTPSVYIGQNIMNVLFLTMMTFTSYIIPYHQMPVWFGWYHYCNPFSFAFRALMGNEFNGLKFDCIEDAIPKGEFYQNETFTPYRSCATTAAEPGQLYFTGERYLEKSFGWEIKPSTQGFIAYNICIVYGFWILFIICNCIVLNIIDWTSGGFTCKVYLKGKAPKMNDVENEKQQNLLVQQATNNMKESLSMPGGLFTWQHMYYSVPIGGNTMKLLLDDIQGWIKPGQMTALMGSSGAGKTTLLDVLAKRKTTGQVQGTTLLNGKPLEIDFERITGYVEQMDVLNPALTVRETLRFSAKLRGEPTISLEEKFKYVEQVLEMMEMKHLGDALIGDLETGVGISVEERKRTTIGVELVAKPHILFLDEPTSGLDAQSSYNIIKFIRKLADAGMPLVCTIHQPSSVLFEHFDRILLLAKGGKTVYFGDIGEKSKTLTSYFQRHGVRECSDSENPAEYILEACGAGRHGKSVVDWPQAWKESPEYQSICQELKELQVTGSSYASIHVDNGKPREYATSLTYQTIEVYKRLNLIWWRSPGYSYGTFIQSALVGLINGWTFYNLQDSANDMNQRIFFIFNVTMLGILLMFLVLPQFITQQDYFKRDYASKFYHWLPFALSIIVVELPFVLVSGTIFFFCSFWTAGLNSDASTNFFFWLIFMLFLFYCVGFGQAIGAVCINITVALNLLPVLIIFLFLFCGVLVIPDQIPHFWKWVYHLNPCTHFLEAMVTNVLKHVNVVCTTDDLIKFVKPSSFSTCSDYAFEFLNGSNHSVSGSVQSLGGDNCGYCLYKNGEEYYSKLGWSYDNRWRGFGIIAGYFVLNIFLVVLFVFLTRKGKR.

Positions 1–10 (MDSNENKKNG) are enriched in basic and acidic residues. 2 disordered regions span residues 1–40 (MDSN…EEHI) and 75–94 (NIKN…GGGA). Residues 17–34 (NIINNNNDNNNNNDNNNN) are compositionally biased toward low complexity. Residues 25–67 (NNNNNDNNNNSTEEHIESVEQSIKEFNNVANELETEFRDYLVE) are a coiled coil. Positions 155 to 404 (LNVKNWFKKS…FIDMGFECEP (250 aa)) constitute an ABC transporter 1 domain. An ABC transmembrane type-2 1 domain is found at 507 to 753 (WGDKFSLISR…FTGERYLEKS (247 aa)). The next 5 helical transmembrane spans lie at 596–616 (IPII…MFGL), 623–641 (FFIN…NNLY), 653–673 (IGQN…SYII), 680–699 (VWFG…RALM), and 770–790 (ICIV…VLNI). Residues 842-1087 (FTWQHMYYSV…LTSYFQRHGV (246 aa)) form the ABC transporter 2 domain. 879-886 (GSSGAGKT) lines the ATP pocket. Helical transmembrane passes span 1180 to 1200 (GYSY…GWTF), 1216 to 1236 (FIFN…PQFI), 1256 to 1276 (FALS…TIFF), 1293 to 1313 (FFFW…GQAI), 1323 to 1343 (ALNL…VLVI), and 1449 to 1469 (FGII…FVFL). The ABC transmembrane type-2 2 domain occupies 1180 to 1404 (GYSYGTFIQS…TCSDYAFEFL (225 aa)).

Belongs to the ABC transporter superfamily. ABCG family. PDR (TC 3.A.1.205) subfamily.

It localises to the membrane. In Dictyostelium discoideum (Social amoeba), this protein is ABC transporter G family member 15 (abcG15).